The sequence spans 1333 residues: Vascular endothelial growth factor receptor 1 (1333 aa).

A signal peptide spans 1 to 22; the sequence is MVSCWDTAVLPYALLGCLLLTG. The Extracellular portion of the chain corresponds to 23-759; that stretch reads YGSGSKLKVP…QGTSDKSNLE (737 aa). 7 consecutive Ig-like C2-type domains span residues 32-124, 152-215, 231-328, 334-429, 430-550, 557-656, and 662-748; these read PELS…AESS, GRQL…VNGH, LDVQ…TSVH, FISV…NVKP, QIYE…RNIK, PNGF…EVLV, and PHLL…AYLT. Cystine bridges form between C53/C108 and C159/C208. 4 N-linked (GlcNAc...) asparagine glycosylation sites follow: N101, N165, N197, and N252. C253 and C312 are disulfide-bonded. Residues N324, N418, N475, N517, N598, N626, N667, and N714 are each glycosylated (N-linked (GlcNAc...) asparagine). Disulfide bonds link C455–C536 and C578–C637. Cysteines 683 and 732 form a disulfide. A helical membrane pass occupies residues 760 to 781; it reads LITLTCTCVAATLFWLLLTLFI. Over 782-1333 the chain is Cytoplasmic; sequence RKLKRSSSEV…SVVLYSSPPA (552 aa). Positions 828-1158 constitute a Protein kinase domain; sequence LKLGKSLGRG…ELVEKLGDLL (331 aa). Residues 834–842 and K862 contribute to the ATP site; that span reads LGRGAFGKV. Y915 carries the post-translational modification Phosphotyrosine; by autocatalysis. The interval 947–983 is disordered; it reads EPGLEQGQKPRLDSVSSSSVTSSSFPEDRSVSDVEGD. Positions 960 to 970 are enriched in low complexity; the sequence is SVSSSSVTSSS. The active-site Proton acceptor is D1022. Y1053, Y1169, Y1213, Y1242, Y1322, and Y1328 each carry phosphotyrosine; by autocatalysis.

The protein belongs to the protein kinase superfamily. Tyr protein kinase family. CSF-1/PDGF receptor subfamily. As to quaternary structure, interacts with VEGFA, VEGFB and PGF. Monomer in the absence of bound VEGFA, VEGFB or PGF. Homodimer in the presence of bound VEGFA, VEGFB and PGF. Can also form a heterodimer with KDR. Interacts (tyrosine phosphorylated) with CBL, CRK, GRB2, NCK1, PIK3R1, PLCG, PSEN1 and PTPN11. Probably interacts with PTPRB. Interacts with RACK1. Identified in a complex with CBL and CD2AP. N-glycosylated. In terms of processing, ubiquitinated after VEGFA-mediated autophosphorylation, leading to proteolytic degradation. Post-translationally, autophosphorylated on tyrosine residues upon ligand binding. Autophosphorylation occurs in trans, i.e. one subunit of the dimeric receptor phosphorylates tyrosine residues on the other subunit. Phosphorylation at Tyr-1169 is important for interaction with PLCG. Phosphorylation at Tyr-1213 is important for interaction with PIK3R1, PTPN11, GRB2, and PLCG. Phosphorylation at Tyr-1328 is important for endocytosis and for interaction with CBL, NCK1 and CRK. Is probably dephosphorylated by PTPRB.

It localises to the cell membrane. Its subcellular location is the endosome. The enzyme catalyses L-tyrosyl-[protein] + ATP = O-phospho-L-tyrosyl-[protein] + ADP + H(+). With respect to regulation, present in an inactive conformation in the absence of bound ligand. Binding of VEGFA, VEGFB or PGF leads to dimerization and activation by autophosphorylation on tyrosine residues. In terms of biological role, tyrosine-protein kinase that acts as a cell-surface receptor for VEGFA, VEGFB and PGF, and plays an essential role in the development of embryonic vasculature, the regulation of angiogenesis, cell survival, cell migration, macrophage function, chemotaxis, and cancer cell invasion. Acts as a positive regulator of postnatal retinal hyaloid vessel regression. May play an essential role as a negative regulator of embryonic angiogenesis by inhibiting excessive proliferation of endothelial cells. Can promote endothelial cell proliferation, survival and angiogenesis in adulthood. Its function in promoting cell proliferation seems to be cell-type specific. Promotes PGF-mediated proliferation of endothelial cells, and proliferation of some types of cancer cells, but does not promote proliferation of normal fibroblasts. Has very high affinity for VEGFA and relatively low protein kinase activity; may function as a negative regulator of VEGFA signaling by limiting the amount of free VEGFA and preventing its binding to KDR. Modulates KDR signaling by forming heterodimers with KDR. Ligand binding leads to the activation of several signaling cascades. Activation of PLCG leads to the production of the cellular signaling molecules diacylglycerol and inositol 1,4,5-trisphosphate and the activation of protein kinase C. Mediates phosphorylation of PIK3R1, the regulatory subunit of phosphatidylinositol 3-kinase, leading to the activation of phosphatidylinositol kinase and the downstream signaling pathway. Mediates activation of MAPK1/ERK2, MAPK3/ERK1 and the MAP kinase signaling pathway, as well as of the AKT1 signaling pathway. Phosphorylates SRC, YES1 and PLCG, and may also phosphorylate CBL. Promotes phosphorylation of AKT1 and PTK2/FAK1. The protein is Vascular endothelial growth factor receptor 1 (Flt1) of Mus musculus (Mouse).